The primary structure comprises 5193 residues: MHYLALSPGFLCYTIKTLILAYLASVLVLAASQGVFPRLENVGAFRKVSTVPTHATCGFPGPSTFCRSPVAAEHVQLCTERLCIQDCPYRSASPLYTALLEGLRSCIPADDGDLHPYSRSSSVSFMFGSHQNCPSLRAPRLAAELTLAVWLKLEQGGTMCVIEKTVDGQIVFKVTISEKETMFYYRTVNGLQPPIKVMTPGRILMKKWIHLTVQVHQTAISFFVDGLEENSTAFDTRTLHDSVTDSVSSVIQVGQSLNGSEQFVGRMQDFRLYNVSLTNREILEVFSGDFPHLHIQPHCRCPGSHPRVHPSVQQYCIPNGAGDTPEHRMSRLNPEAHPLSFINDDDVATSWISHVFTNITQLYEGVAISIDLENGQYQVLKVITQFSSLQPVAIRIQRKKADSSPWEDWQYFARNCSVWGMKDNEDLENPNSVNCLQLPDFIPFSHGNVTFDLLTSGQKHRPGYNDFYNSSVLQEFMRATQIRLHFHGQYYPAGHTVDWRHQYYAVDEIIVSGRCQCHGHAETCDRTRRPYRCLCSPHSFTEGPQCDRCSPLYNDKPFRSGDNVNAFNCKPCQCHGHASSCHYDASVDPFPLEHNRGGGGVCDDCQHHTTGRHCESCQDYFYRPVGADPAAPDACKLCDCNRAGTRNGSLHCDPIGGQCDCKRRVSGRQCLQCQDGFYDLQALDPDGCRPCNCNPSGTVDGDITCHQNSGQCSCKANVIGLRCNRCNFGFKFLQSFNGDGCEPCQCNLHGSVNQLCDPLSGQCACKKEAKGLKCDSCRENFYGLPWSACEVCDCSKAGSQPGTVCDTETGQCVCKPNVGGRQCSQCKAGYFNLYQNDSHLCLTCNCEKMGTVNGSLRCDKSTGQCPCKLGVTGLRCHQCKPHRFNLTMDNPQGCQACDCDSLGTLPGSMCDPISGQCLCLPHRQGRRCEQCQPGFYSSPSNATGCLPCLCHTAGAVSHICNSVTGQCSCHDPSTTGRSCHQCQESYFRFDPLTGRCRPCHCHVAGASNGTCDAVTGQCFCKEFVTGSKCDTCVPGASHLDVNNLLGCSKTPSQQPPPRGWVQSSSTINVSWSPPECPNAHWLTYTLFRNGSEIYTTEDEHPYYTQYFLDTSLSPHTAYSYYIETSNVHSSTRSIPVIYETKPEVSEGHLNLTHIIPVGSDSITLTWTGLSNSSDPVAKYVLSCTPVDSTEPCVSYEGPETSATIWNLVPFTQYCFSVQGCTNESCFYSLPIIVTTAQAPPQTQGPPTVWKISPTELRIEWSPPVDSNGIIISYELYMRRWLSTEESLVFESHGLVSSHSALQSVNPSKNLLQQPQASTFISGLEPHTEYAFRVLAVNMAGRVSSAWASERTGESVPVFMAPPSVSPLSPHSLSVSWEKPAENFTRGEIIGYKISMVSEHFPLHDVPVMCSKMVHFAKSQDQSYIVRGLEPYRTYSFTVSLCDSVGCVTSALGSGQTLAAAPAQLRPPMVTGVNSTTVHIRWLPPAGVNGPPPLYHLERKKSSLPAATAAVTKGTRFVGHGYCRFPRTAHADFIGIKASFRTRVPEGLILLALSPGDQEEYFTLQLKNGRPYFLYNSQGTLVEVTPTDDPSQGYRDGEWHEIIAVRHQAFGQITLDGQYTGSSSSLNGSSVTGGYTGLFVGGVPQGHSVLQKRLEIIQRGFVGCLKDVFIMKGYSPSGTWLPLDWQSSEEQVNVHPSWEGCPTNLEEGVQFLGAGFLELPSDTFHAAKDFEISLKFQTDQLNGLLLFIHNTEGPDFLAVELKRGLLSFKFNSSLVFTRVDLRLGLADCDGKWNTVSIKKEGSVVSVRVNALKKSTSQAGGQPLLVNSPVYLGGIPRELQDAYRHLTLEPGFRGCVKEVAFARGVVVNLASVSSRAVRVNQDGCLSSDSTVNCGGNDSILVYRGSQQSVYESGLQPFTEYLYRVTASHEGGAVSSDWSRGRTLGTAPQSVPTPSRAQSINGSSVEVAWNEPAVVKGVLEKYVLKAYSEDSSQPRVPSASTELHDTSTHSGVLIGLHPFHSYTVTLTACSRAGCTESSQALSISTPQEAPQEVQAPVAVALPNSLSFFWSLPRQANGIITQYSLYVDGRLVYTGKGQNYTVTDLRVFAAYEIIVGACTQAGCTNSSQVILHTAQLPPEQVDPPGLTVLDSRTIHVRWKQPRQLNGILERYILYILNPIHNSTMWSVVYNSTEKLQAHVLHHLSPGGLYLIRLRVCTGGGCTTSEPSQALMEETIPEGVPAPRAHSYSPDSFNISWTEPEYPNGVITTYELYLDDTLIHNSSGLSCHAYGFDPGSLHTFQVQACTAKGCALGPLVGNRTLEAPPEGVVNVLVKPEGSREAHVRWDAPAHPNGRLTYSVHFTGSFYADQAGDNYTLLSGTKTIRGIEGSRLWVLVDGLVPCSHYMVQVNASNSRGSVLSDPVSVEMPPGAPDGLLSPRLAAAAPTSLQVVWSTPARNNAPGSPRYQLQMRPGPSTHGRLELFPIPSASLSYEVTGLQPFTVYEFRLVATNGFGTAYSAWTPLMTTEDKPGPIDAPILINVKARMLSVIWRQPAKCNGAITHYNIYLHGRLYLTVSGRVTNYTVVPLHPYKAYHFQVEACTSQGCSKSPSSETVWTLPGNPEGIPSPQLFPYTPTSIIVTWQPSAHLDLLVENVTIERRVKGKKEVRNLVTLARSQAMKFIDNDPALRPWTRYEYRVLGSTLDGGTNSSAWVEVTTRPCRPSGVQPPTVRVLAPDTVEVSWKAPLMQNGDILSYEIRMPEPLIKMTNMSSIMLSHLVKHLIPFTNYSVTIVACSGGNGYLAGCTESPPTLATTHPAPPQELAPLSVILLSESDVGISWQPPSKPNGPNLRYELLRCKIQQPLASNPPEDLNLWHNIYSGTRWFYKDKGLSRFTTYEYKLFVHNSVGFTPSREVTVTTLAGSPERGATVTASILNHTAIDVRWKKPTFQDLQGDVEYYTLFWSSGTSEESLKIFPDVDFHVIGQLSPNVEYQVFLLVFNGVHAINSTVVHVTMWEEEPQGMLPPEVVIINSTAVRVIWTSPSNPNAVVTESSVYVNNKLYKTGTDAPGSFVLEDLSPFTIYDIQVEVCTKDACVKSNGTQVSTAEDTPSDISIPVIRGITSRSLQIDWTTPANPNGIILGYDVLRKTWRPCSETQKLTDKPRDELCKAVKCQYPGKVCGHTCYSPGTKVCCDGLLYDPQPGYSCCEDKYIALSPNATGVCCGGRMWEAQPDHQCCSGHYARILPGEICCPDERHNRVSVGFGDACCGTMPYATSGSQVCCAGRLQDGYRQQCCGGEMVSQDFQCCGGGEEGMVYSYLPGMLCCGQDYVNMSETICCSASSGESKAHVRKDDPTPVKCCGTELSPESQRCCDGVGYNPLKYVCSDEISAGMAMKETRVCATICPATMKATAHCGRCDFNATTHICTVMRGPLNPTGKKAVEGLCSAAEEIVHSGDVNTHSFIDRDLKPSTVYEYRISAWNSYGRGFSQSVRASTREDVPEGVKAPRWARTGKHEDVIFLQWEEPMQSNGPIIHYILFRDGRERFQGTALSFTDTQGIQPLQEYSYQLKACTAAGCAVSCKVVAATTQRSPENVPPPNITAQSSETLHLSWSVPEKMKDAIKAYQLWLDGKGLIYTDTSDRRQHTVTGLQPYTNYSFTLAVCTSVGCTSSEPCVGQTLQAAPQGVWVTPRHIIINSTTVELYWNPPERPNGLISQYQLRRNGSLLLVGGRDNQSFTDSNLEPGSRYIYKLEARTGGGSSWSEDYLVQMPLWTPEDIHPPCNVTVLGSDSIFVAWPTPGNLLPKIPVEYSILLSGGSVTLLVFSVRHRQSAHLKNLSPFTQYEIRIQACQNGGCGVSPGTYVRTLEAAPVGLMPPLLKALGSSCIEVKWMPPTRPNGIITSYVVHRRPADTEEESLLFVWSEGALEFTDDTGTLRPFTLYEYRVRAWNSQGAVDSPWSTIQTLEAPPRGLPAPRVQATSAHSAMLNWTEPEAPNGLISQYHVIYQERPDAAAPGSSTVHAFTVTGTSRQAHLFGLEPFTTYHIGVVAVNSAGKVSSPWTLIKTLESAPSGLMNFTVEQREKGRALLLQWSEPVKTNGVIKAYNIFNDGVLEYSGLGRQFLFRRLAPFTLYTLILEACTTAGCAHSVPQPLWTEEAPPDTQMAPTIQSVGPTNVRLHWSQPASPNGKIIHYEVIRRRSEEEDWGNTTWQADGNTVFTEYNTQGNAWVYNDTGLQPWRQYAYRICAWNSAGHTCSSWNVVRTLQAPPDGLSPPEISYVSMSPLQLLISWLPPRHSNGVIQGYRLQRDGVLPALNFNASTFSYMDSQLLPFSTYSYAILACTGGGCCTSEPTNITTPEVPPSEVSPPVLWDISAHQMNVSWSPPSIPNGKIVKYLLQCDGEEHLAGQGLSFLLSNLQPSTQYNISLVACTSGGCTASRTTSAWTKEAPPENMDPPTLHITGPESIEITWTPPRNPHGLIRSYELRRDGAIVYVGLETRYHDFTLAPGVEYSYSVTATNSRGSVLSPLVKGQTSPSAPSGLQPPKLHSGDALELLADWDPPVRTNGKIINYTLFVREMFEGKTRAMSINTTHSSFGTRSLTVKHLKPFHRYEVRVQACTALGCTSSEWTSTQTSEVPPLRQPAPHLEVQTATGGFQPIVAVWWAGPLQPNGKIICFELYRRQVAAWPGTSSSLLIYNGSFRSFMDSELLPFTEYEYQVWAVNSAGKAASNWTRCRTGPAPPEGLQAPTFHTVSSTRAVVNISVPSRPNGNISLFRVFSNSSGTHVTLSEGTATQQTLHDLSPFTTYTIGVEACTCFNCCSRGPTAELRTHPAPPSGLSPPQVQTLGSRMASVHWTPPLLPNGVIHSYELQLQRACPPDSAPRCPPSHTERKYWGPGHRASLAGLQPNTAYGVQVVAYNEAGSTASGWTNFSTKKEMPQYQALFSVDSNASMVWVDWSGTFLLNGHLKEYVVTDGGRRVYSGLDTTLYIPRMVDKIFFFQVTCTTDIGSVKTPLVQYDAATGSGLVLTTPGEKKGAGTKSTEFYSELWFIMVMAVVGLILLAIFLSLILQRKIHKEPCIRERPPLVPLQKRMTPLSVYPPGETHVGLADTRLPRSGTPMSIRSSQSVSVLRIPSQSQLSHAYSQSSLHRSVSQLMDMADKKVVTEDSLWETIMGHSSGLYVDEEELMNAIKGFSSVTKEHTAFTDTHL.

The signal sequence occupies residues 1-34; the sequence is MHYLALSPGFLCYTIKTLILAYLASVLVLAASQG. The Extracellular segment spans residues 35-5033; it reads VFPRLENVGA…KSTEFYSELW (4999 aa). Residues N230, N258, N274, N358, N415, N448, and N469 are each glycosylated (N-linked (GlcNAc...) asparagine). In terms of domain architecture, Laminin N-terminal spans 268-514; that stretch reads QDFRLYNVSL…AVDEIIVSGR (247 aa). Intrachain disulfides connect C515–C524, C517–C533, C535–C546, C549–C569, C572–C581, C574–C602, C605–C614, C617–C635, C638–C652, C640–C659, C661–C670, C673–C688, C691–C705, C693–C712, C714–C723, C726–C741, C744–C756, C746–C763, C765–C774, C777–C789, C792–C805, C794–C812, C814–C823, and C826–C846. 10 consecutive Laminin EGF-like domains span residues 515–571, 572–637, 638–690, 691–743, 744–791, 792–848, 853–896, 897–947, 948–998, and 999–1049; these read CQCH…NCKP, CQCH…ACKL, CDCN…GCRP, CNCN…GCEP, CQCN…ACEV, CDCS…NCEK, NGSL…GCQA, CDCD…GCLP, CLCH…RCRP, and CHCH…GCSK. N-linked (GlcNAc...) asparagine glycosylation is present at N647. 2 N-linked (GlcNAc...) asparagine glycosylation sites follow: N836 and N853. 14 disulfides stabilise this stretch: C867–C876, C879–C894, C897–C910, C899–C917, C919–C928, C931–C945, C948–C960, C950–C967, C969–C979, C982–C996, C999–C1011, C1001–C1018, C1020–C1029, and C1032–C1047. N-linked (GlcNAc...) asparagine glycosylation is present at N885. N941 carries an N-linked (GlcNAc...) asparagine glycan. An N-linked (GlcNAc...) asparagine glycan is attached at N1008. Fibronectin type-III domains lie at 1055-1143, 1147-1241, 1242-1357, 1358-1462, and 1463-1566; these read PPPR…TKPE, GHLN…APPQ, TQGP…SVPV, FMAP…AAPA, and QLRP…LQLK. N-linked (GlcNAc...) asparagine glycans are attached at residues N1068, N1089, N1150, N1171, and N1222. N-linked (GlcNAc...) asparagine glycosylation is found at N1382, N1473, and N1626. Laminin G-like domains are found at residues 1511 to 1700 and 1705 to 1882; these read TKGT…WEGC and EEGV…QDGC. A disulfide bridge connects residues C1663 and C1700. N1770 carries N-linked (GlcNAc...) asparagine glycosylation. Fibronectin type-III domains follow at residues 1847-1946, 1948-2045, 2046-2132, 2133-2234, 2235-2321, 2322-2421, 2422-2525, 2526-2613, 2617-2713, 2717-2810, 2811-2914, 2918-3009, and 3013-3103; these read EPGF…TAPQ, VPTP…TPQE, APQE…TAQL, PPEQ…IPEG, VPAP…APPE, GVVN…SVEM, PPGA…DKPG, PIDA…TLPG, GIPS…TRPC, GVQP…THPA, PPQE…TLAG, RGAT…MWEE, and GMLP…TPSD. Cysteines 1853 and 1882 form a disulfide. N-linked (GlcNAc...) asparagine glycosylation is present at N1894. Positions 1931–1955 are disordered; it reads VSSDWSRGRTLGTAPQSVPTPSRAQ. The span at 1943 to 1955 shows a compositional bias: polar residues; that stretch reads TAPQSVPTPSRAQ. 10 N-linked (GlcNAc...) asparagine glycosylation sites follow: N1958, N2095, N2121, N2177, N2186, N2249, N2276, N2313, N2368, and N2404. N2575, N2647, N2701, N2761, and N2779 each carry an N-linked (GlcNAc...) asparagine glycan. Residues N2928, N2998, N3023, N3090, N3208, N3322, and N3411 are each glycosylated (N-linked (GlcNAc...) asparagine). 17 consecutive Fibronectin type-III domains span residues 3395–3489, 3490–3580, 3581–3671, 3672–3766, 3769–3857, 3858–3955, 3956–4059, 4060–4148, 4149–4256, 4257–4346, 4347–4437, 4438–4522, 4523–4625, 4628–4725, 4726–4818, 4819–4921, and 4922–5005; these read CPAT…TRED, VPEG…TTQR, SPEN…TLQA, APQG…TPED, PPCN…TLEA, APVG…TLEA, PPRG…SAPS, GLMN…APPD, TQMA…APPD, GLSP…TPEV, PPSE…APPE, NMDP…TSPS, APSG…VPPL, PAPH…TGPA, PPEG…THPA, PPSG…TKKE, and MPQY…YDAA. N-linked (GlcNAc...) asparagine glycosylation is found at N3589, N3645, N3686, N3712, N3723, and N3772. N-linked (GlcNAc...) asparagine glycans are attached at residues N3976, N4063, N4194, N4218, N4304, N4340, N4365, and N4410. 9 N-linked (GlcNAc...) asparagine glycosylation sites follow: N4556, N4575, N4683, N4716, N4746, N4756, N4765, N4915, and N4934. The helical transmembrane segment at 5034-5054 threads the bilayer; that stretch reads FIMVMAVVGLILLAIFLSLIL. Topologically, residues 5055 to 5193 are cytoplasmic; it reads QRKIHKEPCI…EHTAFTDTHL (139 aa). Residues 5191 to 5193 carry the PDZ-binding motif; sequence THL.

Interacts with collagen IV and fibronectin via its laminin EGF-like domains. Interaction with collagen may be required for stable integration into the basement membrane. Interacts with NINL. Interacts with USH1C. Component of USH2 complex, composed of ADGRV1, PDZD7, USH2A and WHRN. Interacts with ADGRV1/MASS1 (via N-terminal PDZ domain). Interacts (via the cytoplasmic region) with WHRN. Interacts (via the cytoplasmic region) with PDZD7. Interacts (via the cytoplasmic region) with VEZT and MYO7A (via MyTH4-FERM domains); the interaction associates VEZT with the USH2 complex at the stereocilia base. As to expression, present in the testis, epididymis, oviduct, spleen, submaxillary gland, and small and large intestines. Not detected in the brain, skin, lung, skeletal muscle, cardiac muscle, liver or kidney. Expressed in smooth muscle of the colon and the epididymis. Also present in select vascular basement membranes. In the cochlea, it is present in virtually every basement membrane. It is particularly high in the strial capillary basement membranes (SCBMs). In the retina, it is again expressed in all of the basement membranes. It is also very prevalent in the lens capsule and the Bruch's layer between the retinal pigment epithelium and the choroid layer, which is very rich in basement membranes. In neonates in it is widely expressed in the basement membranes of the cochlea. Present in the synaptic terminals of retinal photoreceptors (at protein level).

It localises to the cell projection. It is found in the stereocilium membrane. Its subcellular location is the photoreceptor inner segment. The protein localises to the secreted. Its function is as follows. Involved in hearing and vision as member of the USH2 complex. In the inner ear, required for the maintenance of hair bundle ankle formation, which connects growing stereocilia in developing cochlear hair cells. In retina photoreceptors, the USH2 complex is required for the maintenance of periciliary membrane complex that seems to play a role in regulating intracellular protein transport. This chain is Usherin (Ush2A), found in Mus musculus (Mouse).